Reading from the N-terminus, the 320-residue chain is Beta-carotene 4-ketolase 3 (320 aa).

The enzyme catalyses echinenone + 2 AH2 + 2 O2 = canthaxanthin + 2 A + 3 H2O. It catalyses the reaction all-trans-beta-carotene + 2 AH2 + 2 O2 = echinenone + 2 A + 3 H2O. It functions in the pathway carotenoid biosynthesis. In terms of biological role, involved in the biosynthesis of ketocarotenoids which are powerful anti-oxidative molecules. Catalyzes the conversion of beta-carotene to canthaxanthin via echinenone. The chain is Beta-carotene 4-ketolase 3 from Haematococcus lacustris (Green alga).